The sequence spans 354 residues: MQPHLFTPLTIGSVTLRNRIGMSPMCQYSAVDGFPTDWHLMHLGARAAGGVGLIILEATAVSPEGRISPFDLGIWSDDHIAALSRIVKLIESLGAVAGIQLAHAGRKASVGRPWEGGKPIAPANGGWPVVGPTAEPFAPGYPTPIPLDAAGIARVVADFATATKRARAAGFRWIEIHAAHGYLLHNFLSPLGNDRNDEYGGDLRGRVRLLSEVTAAVRAEWPSDLPLAVRLSCSDWTPEGLTIADTVEVARMLREQGVDLIDCSSGGIAPGITIPVGEGYQVPFAAQVRREANIATAAVGLITRPEHADAIVRNGDADLVLLGRELLRDPHWPLRAARALGHDLAPPPQYLRAW.

FMN contacts are provided by Ser23, Pro24, Cys26, Ala58, and Gln100. Tyr182 functions as the Proton donor in the catalytic mechanism. FMN is bound by residues Arg230, Leu301, Gly323, and Arg324.

Belongs to the NADH:flavin oxidoreductase/NADH oxidase family. NamA subfamily. In terms of assembly, homodimer. Behaves as an active monomer in solution while in the crystal packing assembles following the classical dimeric architecture of other thermophilic-like ene-reductases. The cofactor is FMN.

It carries out the reaction A + NADPH + H(+) = AH2 + NADP(+). Ene-reductase that catalyzes the stereoselective reduction of activated C-C double bonds. Shows very good activity with 4-ketoisophorone, 2-cyclohexen-1-one and 1-octen-3-one, and low activity with maleimide, 2-methyl-pentenal, 2-methyl-cyclohexen-1-one, 2-cyclopenten-1-one and trans-2-hexen-1-al. Shows the highest catalytic efficiency with ketoisophorone. Exhibits a restricted substrate spectrum with generally lower activities compared to other ene-reductases. The protein is NADPH dehydrogenase of Chloroflexus aggregans (strain MD-66 / DSM 9485).